An 834-amino-acid polypeptide reads, in one-letter code: Glycerol-3-phosphate acyltransferase (834 aa).

The HXXXXD motif signature appears at 309–314; it reads CHRSHI.

It belongs to the GPAT/DAPAT family.

It localises to the cell inner membrane. It carries out the reaction sn-glycerol 3-phosphate + an acyl-CoA = a 1-acyl-sn-glycero-3-phosphate + CoA. Its pathway is phospholipid metabolism; CDP-diacylglycerol biosynthesis; CDP-diacylglycerol from sn-glycerol 3-phosphate: step 1/3. This is Glycerol-3-phosphate acyltransferase from Pseudomonas fluorescens (strain ATCC BAA-477 / NRRL B-23932 / Pf-5).